The primary structure comprises 292 residues: Tyrosine isonitrile desaturase (292 aa).

Fe cation contacts are provided by H110, D112, and H259.

This sequence belongs to the TfdA dioxygenase family. Requires Fe(2+) as cofactor.

The enzyme catalyses (2S)-3-(4-hydroxyphenyl)-2-isocyanopropanoate + 2-oxoglutarate + O2 = (2E)-3-(4-hydroxyphenyl)-2-isocyanoprop-2-enoate + succinate + CO2 + H2O. Its function is as follows. Catalyzes the 2-oxoglutarate-dependent oxidation of tyrosine isonitrile. This Erwinia amylovora (strain CFBP1430) protein is Tyrosine isonitrile desaturase.